Here is a 151-residue protein sequence, read N- to C-terminus: MKKAVFPGSFDPLTLGHTDIIDRALPLFDEIILAIGTNSSKKYMFSLEDRLHFLKETYKNESKVKVETYKGLTVDFCKSQNAGFILRGLRNGQDLEFEKSIGQTNYKMSGIDSIFLLSSSGKAHISSTVVRDVMHHGGNYEFMVPDVVRKK.

S9 is a substrate binding site. Residues 9 to 10 (SF) and H17 each bind ATP. Substrate is bound by residues K41, T73, and R87. ATP contacts are provided by residues 88–90 (GLR), E98, and 122–128 (KAHISST).

The protein belongs to the bacterial CoaD family. In terms of assembly, homohexamer. The cofactor is Mg(2+).

The protein localises to the cytoplasm. It carries out the reaction (R)-4'-phosphopantetheine + ATP + H(+) = 3'-dephospho-CoA + diphosphate. Its pathway is cofactor biosynthesis; coenzyme A biosynthesis; CoA from (R)-pantothenate: step 4/5. Its function is as follows. Reversibly transfers an adenylyl group from ATP to 4'-phosphopantetheine, yielding dephospho-CoA (dPCoA) and pyrophosphate. The chain is Phosphopantetheine adenylyltransferase from Christiangramia forsetii (strain DSM 17595 / CGMCC 1.15422 / KT0803) (Gramella forsetii).